The chain runs to 151 residues: Ribosome maturation factor RimP (151 aa).

The protein belongs to the RimP family.

Its subcellular location is the cytoplasm. Functionally, required for maturation of 30S ribosomal subunits. This Shewanella woodyi (strain ATCC 51908 / MS32) protein is Ribosome maturation factor RimP.